The primary structure comprises 763 residues: 5-methyltetrahydropteroyltriglutamate--homocysteine methyltransferase (763 aa).

5-methyltetrahydropteroyltri-L-glutamate is bound by residues 16–19 (RELK) and Lys121. L-homocysteine contacts are provided by residues 440–442 (IGS) and Glu493. L-methionine-binding positions include 440-442 (IGS) and Glu493. 5-methyltetrahydropteroyltri-L-glutamate-binding positions include 524–525 (RC) and Trp570. Residue Asp608 participates in L-homocysteine binding. Asp608 is an L-methionine binding site. Glu614 provides a ligand contact to 5-methyltetrahydropteroyltri-L-glutamate. Zn(2+) is bound by residues His650, Cys652, and Glu674. Catalysis depends on His703, which acts as the Proton donor. Cys735 is a Zn(2+) binding site.

This sequence belongs to the vitamin-B12 independent methionine synthase family. It depends on Zn(2+) as a cofactor.

The enzyme catalyses 5-methyltetrahydropteroyltri-L-glutamate + L-homocysteine = tetrahydropteroyltri-L-glutamate + L-methionine. It functions in the pathway amino-acid biosynthesis; L-methionine biosynthesis via de novo pathway; L-methionine from L-homocysteine (MetE route): step 1/1. In terms of biological role, catalyzes the transfer of a methyl group from 5-methyltetrahydrofolate to homocysteine resulting in methionine formation. This chain is 5-methyltetrahydropteroyltriglutamate--homocysteine methyltransferase, found in Paraburkholderia phymatum (strain DSM 17167 / CIP 108236 / LMG 21445 / STM815) (Burkholderia phymatum).